The following is a 592-amino-acid chain: LIM domain-binding protein 1 (592 aa).

Disordered regions lie at residues 14–41 (GHPP…NSQN) and 305–368 (PAPE…NPMT). The span at 23 to 41 (ESSNSHYGMPPSQGTNSQN) shows a compositional bias: polar residues. The span at 322–344 (PAANPRGSKKATAAAAAAAAAAT) shows a compositional bias: low complexity. Residues 352 to 368 (PTASPANNQQFPPNPMT) show a composition bias toward polar residues. Positions 378 to 417 (DVMVVGEPSMMGSEFGENDERTISRVENSQYDPNAMQMQS) constitute an LIM interaction domain (LID) domain. 2 disordered regions span residues 437–458 (HHPG…MGSQ) and 559–592 (GGMQ…MITG). The segment covering 577-586 (GPPPQWPPPN) has biased composition (pro residues).

This sequence belongs to the LDB family. In terms of assembly, interacts with blmp-1. In terms of tissue distribution, expressed in all neurons and some other tissues of the adult, including vulval muscle, and, in males, all the neurons of the tail region. Expressed in vulval cells.

In terms of biological role, binds to the LIM domain of LIM domain-containing transcription factors. Required for the blmp-1-mediated transcriptional activation or repression of several hypodermal genes, such as bed-3. Regulates sam-10 nuclear localization in PLM neurons. Has a role in synaptic differentiation of PLM mechanosensory neurons. Involved in gonadogenesis. This chain is LIM domain-binding protein 1, found in Caenorhabditis elegans.